We begin with the raw amino-acid sequence, 399 residues long: Protein translocase subunit SecD (399 aa).

6 helical membrane passes run 7–27 (IKTA…LTFP), 239–259 (VIGA…LGLV), 262–282 (IALL…NATL), 286–306 (GVAG…LIFA), 329–351 (ALRA…FYFG), and 357–381 (GFAV…RTLL).

The protein belongs to the SecD/SecF family. SecD subfamily. As to quaternary structure, forms a complex with SecF. Part of the essential Sec protein translocation apparatus which comprises SecA, SecYEG and auxiliary proteins SecDF. Other proteins may also be involved.

The protein localises to the cell inner membrane. Its function is as follows. Part of the Sec protein translocase complex. Interacts with the SecYEG preprotein conducting channel. SecDF uses the proton motive force (PMF) to complete protein translocation after the ATP-dependent function of SecA. The protein is Protein translocase subunit SecD of Dictyoglomus turgidum (strain DSM 6724 / Z-1310).